Consider the following 397-residue polypeptide: Ribosomal RNA large subunit methyltransferase I (397 aa).

Residues 2-79 (SASIYLVKGR…KEETVDLDFF (78 aa)) enclose the PUA domain.

The protein belongs to the methyltransferase superfamily. RlmI family.

It is found in the cytoplasm. The catalysed reaction is cytidine(1962) in 23S rRNA + S-adenosyl-L-methionine = 5-methylcytidine(1962) in 23S rRNA + S-adenosyl-L-homocysteine + H(+). Specifically methylates the cytosine at position 1962 (m5C1962) of 23S rRNA. This chain is Ribosomal RNA large subunit methyltransferase I, found in Aeromonas hydrophila subsp. hydrophila (strain ATCC 7966 / DSM 30187 / BCRC 13018 / CCUG 14551 / JCM 1027 / KCTC 2358 / NCIMB 9240 / NCTC 8049).